The sequence spans 470 residues: 6-phospho-beta-galactosidase (470 aa).

D-galactose 6-phosphate is bound by residues Q19, H116, N159, E160, and N297. E160 acts as the Proton donor in catalysis. E375 serves as the catalytic Nucleophile. 4 residues coordinate D-galactose 6-phosphate: S430, W431, K437, and Y439.

It belongs to the glycosyl hydrolase 1 family.

The enzyme catalyses a 6-phospho-beta-D-galactoside + H2O = D-galactose 6-phosphate + an alcohol. Its pathway is carbohydrate metabolism; lactose degradation; D-galactose 6-phosphate and beta-D-glucose from lactose 6-phosphate: step 1/1. The protein is 6-phospho-beta-galactosidase of Staphylococcus aureus (strain USA300).